A 123-amino-acid chain; its full sequence is Large ribosomal subunit protein bL12 (123 aa).

Belongs to the bacterial ribosomal protein bL12 family. As to quaternary structure, homodimer. Part of the ribosomal stalk of the 50S ribosomal subunit. Forms a multimeric L10(L12)X complex, where L10 forms an elongated spine to which 2 to 4 L12 dimers bind in a sequential fashion. Binds GTP-bound translation factors.

Its function is as follows. Forms part of the ribosomal stalk which helps the ribosome interact with GTP-bound translation factors. Is thus essential for accurate translation. This Albidiferax ferrireducens (strain ATCC BAA-621 / DSM 15236 / T118) (Rhodoferax ferrireducens) protein is Large ribosomal subunit protein bL12.